We begin with the raw amino-acid sequence, 84 residues long: MPDVFTHPDKTLDTQGLRCPEPVMMVRKTVRHMEAGQMLLILADDPATTRDIPSFCRFMEHQLVAQETEQMPYRYLVRKKESQL.

C19 (cysteine persulfide intermediate) is an active-site residue.

Belongs to the sulfur carrier protein TusA family. In terms of assembly, interacts with IscS.

It localises to the cytoplasm. The protein operates within tRNA modification. Functionally, sulfur carrier protein involved in sulfur trafficking in the cell. Part of a sulfur-relay system required for 2-thiolation during synthesis of 2-thiouridine of the modified wobble base 5-methylaminomethyl-2-thiouridine (mnm(5)s(2)U) in tRNA. Interacts with IscS and stimulates its cysteine desulfurase activity. Accepts an activated sulfur from IscS, which is then transferred to TusD, and thus determines the direction of sulfur flow from IscS to 2-thiouridine formation. Also appears to be involved in sulfur transfer for the biosynthesis of molybdopterin. This chain is Sulfur carrier protein TusA, found in Photorhabdus laumondii subsp. laumondii (strain DSM 15139 / CIP 105565 / TT01) (Photorhabdus luminescens subsp. laumondii).